The following is a 349-amino-acid chain: ALA-interacting subunit 3 (349 aa).

Residues 1 to 21 are compositionally biased toward low complexity; it reads MSSNTASSSAGAAGSGDSSAA. A disordered region spans residues 1-30; that stretch reads MSSNTASSSAGAAGSGDSSAARKNSKRPKY. Serine 2 carries the post-translational modification N-acetylserine. Residues 50 to 70 traverse the membrane as a helical segment; it reads VISTFLIVSVIFIPLGVISLF. N-linked (GlcNAc...) asparagine glycosylation is found at asparagine 181, asparagine 190, and asparagine 223. The chain crosses the membrane as a helical span at residues 305 to 325; sequence LGIAYLTVGGICFILALAFTI.

Belongs to the CDC50/LEM3 family. As to quaternary structure, interacts with ALA2 and ALA3 in a heterologous system. As to expression, expressed in roots, leaves, stems, flowers and siliques.

The protein resides in the golgi apparatus membrane. It localises to the prevacuolar compartment membrane. The protein localises to the endoplasmic reticulum membrane. Required for the lipid transport activity of the ALA/ALIS P4-ATPase complex. The chain is ALA-interacting subunit 3 (ALIS3) from Arabidopsis thaliana (Mouse-ear cress).